We begin with the raw amino-acid sequence, 520 residues long: MSIEIQWIGIGAAFLVGAIGGALVRRKVAATQLAEAKRMADQILSEATKEADILRKEAEIQKKDALLEAKTAWEQEAREMRRELQAQEKRLVQREENLDRKVAQVDARDEEFGQREKRLSQQESRIRSWEKEADALVRQQRERLEELAGLGAEEAKAQLMEQMESEARHECAKKIKQIEDEAKEAADKKAQEILALAVQRYAGDFVAESAVSVVPLPNDEMKGRIIGREGRNIRAIEAATGIDLIIDDTPEAVIISGFNPVRREVARLALERLIGDGRIHPSRIEEAVNKATQDVDNAIREAGEQATFDVGVHGIHPEIIKLIGRLRYRTSYGQNVLQHSIEVAFLCGIMAAELGINVKQAKRAGLLHDIGKAVDHEVEGSHAVIGANLARKYGESAKIVHALAAHHEDEKPSTVLAVLVQAADALSGARPGARREMLETYVKRLQDLERIGTSFAGVTNCYAIQAGREIRVMVSSEEVSDVQSHTLAKQIARQIEEEMAYPGQIKINVIRETRAVEFAK.

Residues 3-23 form a helical membrane-spanning segment; it reads IEIQWIGIGAAFLVGAIGGAL. One can recognise a KH domain in the interval 210 to 273; that stretch reads AVSVVPLPND…EVARLALERL (64 aa). Positions 336 to 429 constitute an HD domain; the sequence is VLQHSIEVAF…VQAADALSGA (94 aa).

This sequence belongs to the RNase Y family.

The protein resides in the cell membrane. Its function is as follows. Endoribonuclease that initiates mRNA decay. The chain is Ribonuclease Y from Syntrophotalea carbinolica (strain DSM 2380 / NBRC 103641 / GraBd1) (Pelobacter carbinolicus).